Consider the following 37-residue polypeptide: GVIPKKIWETVCPTVEPWAKKCSGDIATYIKRECGKL.

C12 and C34 are oxidised to a cystine.

It belongs to the ectatomin family. Ectatomin-Et subfamily. As to quaternary structure, heterodimer of an A and a B chain; disulfide-linked. As to expression, expressed by the venom gland.

The protein localises to the secreted. Its subcellular location is the target cell membrane. In terms of biological role, algogenic for animals, human and insects. At high concentrations (0.5-1 uM), it acts as a pore-forming protein that forms nonselective cation channels both in cell and artificial membranes. It is weakly selective for cation over anions channel conductance is identical in both directions. At lower concentrations (1-10 nM), this heterodimer inhibits cardiac L-type calcium currents in isolated rat cardiac ventricular myocytes. This chain is Omega/M-ectatotoxin-Et1a subunit A, found in Ectatomma tuberculatum (Selva ant).